The primary structure comprises 229 residues: DNA repair protein RecO (229 aa).

It belongs to the RecO family.

Functionally, involved in DNA repair and RecF pathway recombination. This is DNA repair protein RecO from Legionella pneumophila subsp. pneumophila (strain Philadelphia 1 / ATCC 33152 / DSM 7513).